Consider the following 371-residue polypeptide: N-acetyldiaminopimelate deacetylase (371 aa).

The active site involves D68. E127 (proton acceptor) is an active-site residue.

The protein belongs to the peptidase M20A family. N-acetyldiaminopimelate deacetylase subfamily.

It carries out the reaction N-acetyl-(2S,6S)-2,6-diaminopimelate + H2O = (2S,6S)-2,6-diaminopimelate + acetate. It functions in the pathway amino-acid biosynthesis; L-lysine biosynthesis via DAP pathway; LL-2,6-diaminopimelate from (S)-tetrahydrodipicolinate (acetylase route): step 3/3. Functionally, catalyzes the conversion of N-acetyl-diaminopimelate to diaminopimelate and acetate. The polypeptide is N-acetyldiaminopimelate deacetylase (Halalkalibacterium halodurans (strain ATCC BAA-125 / DSM 18197 / FERM 7344 / JCM 9153 / C-125) (Bacillus halodurans)).